The chain runs to 350 residues: 3-dehydroquinate synthase (350 aa).

Residues 106–110 (GVVGD), 130–131 (TS), K143, and K152 each bind NAD(+). Zn(2+)-binding residues include E185, H246, and H263.

It belongs to the sugar phosphate cyclases superfamily. Dehydroquinate synthase family. Co(2+) is required as a cofactor. Requires Zn(2+) as cofactor. NAD(+) serves as cofactor.

Its subcellular location is the cytoplasm. The catalysed reaction is 7-phospho-2-dehydro-3-deoxy-D-arabino-heptonate = 3-dehydroquinate + phosphate. Its pathway is metabolic intermediate biosynthesis; chorismate biosynthesis; chorismate from D-erythrose 4-phosphate and phosphoenolpyruvate: step 2/7. Functionally, catalyzes the conversion of 3-deoxy-D-arabino-heptulosonate 7-phosphate (DAHP) to dehydroquinate (DHQ). The polypeptide is 3-dehydroquinate synthase (Clostridium perfringens (strain SM101 / Type A)).